A 341-amino-acid polypeptide reads, in one-letter code: MSSSRFDSNKQLTTSSLVIGYALCSSLLAVINKLAITYFNYPGLLTALQYLTCTVAVYLLGKSGLINHDPFTWDTAKKFLPAAIVFYLAIFTNTNLLRHANVDTFIVFRSLTPLLVAIADTVFRSQPLPSRLTFLSLVVILAGAVGYVATDSSFTLTAYSWALAYLVTITTEMVYIKHMVSNIKLNIWGLVLYNNLLSLMIAPVFWFLTGEFTEVFAALSENRGNLFEPYAFSSVAASCVFGFLISYFGFAARNAISATAFTVTGVVNKFLTVVINVLIWDKHATPVGLVCLLFTICGGVGYQQSVKLDKPIEKVSEKDSEKGEEDEELTQLVPGKLASVV.

10 consecutive transmembrane segments (helical) span residues 17-37, 41-61, 71-91, 103-123, 132-152, 156-176, 187-207, 231-251, 260-280, and 283-303; these read LVIG…LAIT, YPGL…YLLG, FTWD…LAIF, DTFI…DTVF, LTFL…ATDS, LTAY…MVYI, IWGL…VFWF, AFSS…FGFA, AFTV…VLIW, and HATP…VGYQ. Residues 316–341 form a disordered region; sequence SEKDSEKGEEDEELTQLVPGKLASVV.

It belongs to the nucleotide-sugar transporter family. GDP-Mannose:GMP antiporter (GMA) (TC 2.A.7.13) subfamily. In terms of tissue distribution, ubiquitous.

Its subcellular location is the golgi apparatus membrane. Acts as the major nucleotide-sugar transporter for the import of GDP-Fucose into the Golgi lumen. Transports GDP-Fucose in a strict counter-exchange mode. Is required for proper plant growth and development. Also acts as a GDP-mannose transporter that may be involved in the import of GDP-mannose from the cytoplasm into the Golgi lumen. This Arabidopsis thaliana (Mouse-ear cress) protein is GDP-fucose transporter 1.